A 236-amino-acid chain; its full sequence is Small ribosomal subunit protein uS2c (236 aa).

It belongs to the universal ribosomal protein uS2 family.

The protein resides in the plastid. It is found in the chloroplast. The protein is Small ribosomal subunit protein uS2c (rps2) of Nymphaea alba (White water-lily).